A 436-amino-acid chain; its full sequence is Probable sodium/metabolite cotransporter BASS4, chloroplastic (436 aa).

Residues 1 to 47 (MAIASTLASTQNPFLCLRQPPSPGNRSVVFRRCQDPCGRRWISRSIR) constitute a chloroplast transit peptide. The next 9 helical transmembrane spans lie at 109-129 (FLPL…TLGC), 131-151 (ADKY…SGLT), 157-177 (IGAA…ILLL), 195-215 (LVTG…GVAL), 225-245 (LALA…PFWV), 257-277 (FPTD…LIIG), 297-314 (LFSK…WIQV), 328-348 (VFLA…AFNA), and 403-423 (PCVA…NLWL).

Belongs to the bile acid:sodium symporter (BASS) (TC 2.A.28) family.

It localises to the membrane. The protein resides in the plastid. The protein localises to the chloroplast envelope. Its function is as follows. May function as sodium-coupled metabolite transporter across the chloroplast envelope. The chain is Probable sodium/metabolite cotransporter BASS4, chloroplastic (BASS4) from Arabidopsis thaliana (Mouse-ear cress).